The following is a 1021-amino-acid chain: Ubiquitin-activating enzyme E1 1 (1021 aa).

ATP contacts are provided by Arg-22, Ala-442, and Asp-468. Position 470 (Asp-470) interacts with Mg(2+). ATP-binding positions include Arg-479, Lys-492, Val-518, and 542-543 (DN). Asp-542 is a binding site for Mg(2+). Residue Cys-598 is the Glycyl thioester intermediate of the active site.

This sequence belongs to the ubiquitin-activating E1 family. Monomer.

It is found in the cytoplasm. It localises to the nucleus. It catalyses the reaction ATP + ubiquitin + [E1 ubiquitin-activating enzyme]-L-cysteine = AMP + diphosphate + S-ubiquitinyl-[E1 ubiquitin-activating enzyme]-L-cysteine.. It functions in the pathway protein modification; protein ubiquitination. Functionally, E1 ubiquitin-activating enzyme that catalyzes the first step in ubiquitin conjugation to mark cellular proteins for degradation through the ubiquitin-proteasome system. Activates ubiquitin by first adenylating its C-terminal glycine residue with ATP, and thereafter linking this residue to the side chain of a cysteine residue in E1, yielding a ubiquitin-E1 thioester and free AMP. This is Ubiquitin-activating enzyme E1 1 (UBA1) from Candida albicans (strain WO-1) (Yeast).